The primary structure comprises 108 residues: Cytochrome c (108 aa).

4 residues coordinate heme c: cysteine 19, cysteine 22, histidine 23, and methionine 85.

This sequence belongs to the cytochrome c family. In terms of processing, binds 1 heme c group covalently per subunit.

The protein resides in the mitochondrion intermembrane space. Electron carrier protein. The oxidized form of the cytochrome c heme group can accept an electron from the heme group of the cytochrome c1 subunit of cytochrome reductase. Cytochrome c then transfers this electron to the cytochrome oxidase complex, the final protein carrier in the mitochondrial electron-transport chain. The polypeptide is Cytochrome c (Stellaria longipes (Longstalk starwort)).